We begin with the raw amino-acid sequence, 256 residues long: Small ribosomal subunit protein eS1 (256 aa).

Over residues 1-18 the composition is skewed to basic residues; that stretch reads MAVGKNKRLSKGKKGLKK. Residues 1 to 22 are disordered; sequence MAVGKNKRLSKGKKGLKKKTQD. Position 2 is an N-acetylalanine; partial (A2).

Belongs to the eukaryotic ribosomal protein eS1 family. As to quaternary structure, component of the small ribosomal subunit. Mature ribosomes consist of a small (40S) and a large (60S) subunit. The 40S subunit contains about 33 different proteins and 1 molecule of RNA (18S). The 60S subunit contains about 49 different proteins and 3 molecules of RNA (25S, 5.8S and 5S).

It localises to the cytoplasm. The protein is Small ribosomal subunit protein eS1 of Pyricularia oryzae (strain Y34) (Rice blast fungus).